The chain runs to 109 residues: Large ribosomal subunit protein uL22 (109 aa).

The protein belongs to the universal ribosomal protein uL22 family. As to quaternary structure, part of the 50S ribosomal subunit.

Its function is as follows. This protein binds specifically to 23S rRNA; its binding is stimulated by other ribosomal proteins, e.g. L4, L17, and L20. It is important during the early stages of 50S assembly. It makes multiple contacts with different domains of the 23S rRNA in the assembled 50S subunit and ribosome. The globular domain of the protein is located near the polypeptide exit tunnel on the outside of the subunit, while an extended beta-hairpin is found that lines the wall of the exit tunnel in the center of the 70S ribosome. The chain is Large ribosomal subunit protein uL22 from Cupriavidus necator (strain ATCC 17699 / DSM 428 / KCTC 22496 / NCIMB 10442 / H16 / Stanier 337) (Ralstonia eutropha).